Here is a 320-residue protein sequence, read N- to C-terminus: Acetyl-coenzyme A carboxylase carboxyl transferase subunit alpha (320 aa).

The 255-residue stretch at 39–293 folds into the CoA carboxyltransferase C-terminal domain; that stretch reads ALDAKAAKLL…RGAIAAMLKE (255 aa).

It belongs to the AccA family. In terms of assembly, acetyl-CoA carboxylase is a heterohexamer composed of biotin carboxyl carrier protein (AccB), biotin carboxylase (AccC) and two subunits each of ACCase subunit alpha (AccA) and ACCase subunit beta (AccD).

It localises to the cytoplasm. The catalysed reaction is N(6)-carboxybiotinyl-L-lysyl-[protein] + acetyl-CoA = N(6)-biotinyl-L-lysyl-[protein] + malonyl-CoA. It functions in the pathway lipid metabolism; malonyl-CoA biosynthesis; malonyl-CoA from acetyl-CoA: step 1/1. Its function is as follows. Component of the acetyl coenzyme A carboxylase (ACC) complex. First, biotin carboxylase catalyzes the carboxylation of biotin on its carrier protein (BCCP) and then the CO(2) group is transferred by the carboxyltransferase to acetyl-CoA to form malonyl-CoA. The sequence is that of Acetyl-coenzyme A carboxylase carboxyl transferase subunit alpha from Ruegeria pomeroyi (strain ATCC 700808 / DSM 15171 / DSS-3) (Silicibacter pomeroyi).